A 446-amino-acid chain; its full sequence is Argininosuccinate lyase (446 aa).

It belongs to the lyase 1 family. Argininosuccinate lyase subfamily.

Its subcellular location is the cytoplasm. The catalysed reaction is 2-(N(omega)-L-arginino)succinate = fumarate + L-arginine. The protein operates within amino-acid biosynthesis; L-arginine biosynthesis; L-arginine from L-ornithine and carbamoyl phosphate: step 3/3. This chain is Argininosuccinate lyase, found in Parabacteroides distasonis (strain ATCC 8503 / DSM 20701 / CIP 104284 / JCM 5825 / NCTC 11152).